The sequence spans 693 residues: CREB-regulated transcription coactivator 2 (693 aa).

The span at 1 to 20 shows a compositional bias: polar residues; the sequence is MATSGANGPGSATASASNPR. The tract at residues 1 to 30 is disordered; it reads MATSGANGPGSATASASNPRKFSEKIALQK. Alanine 2 bears the N-acetylalanine mark. At arginine 51 the chain carries Asymmetric dimethylarginine; by PRMT6. Phosphoserine is present on residues serine 70, serine 86, and serine 90. Arginine 99, arginine 120, and arginine 123 each carry asymmetric dimethylarginine; by PRMT6. At serine 136 the chain carries Phosphoserine. Arginine 161 and arginine 168 each carry asymmetric dimethylarginine; by PRMT6. Phosphothreonine is present on threonine 169. Serine 171 carries the phosphoserine; by AMPK, MARK2, SIK1 and SIK2 modification. At threonine 192 the chain carries Phosphothreonine. Lysine 234 participates in a covalent cross-link: Glycyl lysine isopeptide (Lys-Gly) (interchain with G-Cter in SUMO2). A Nuclear export signal motif is present at residues 271–287; the sequence is TGGSLPDLTNLHFPPPL. Serine 274 bears the Phosphoserine; by MARK2 mark. Disordered stretches follow at residues 282-306 and 328-554; these read HFPP…GGNS and GYDA…MSDF. 5 positions are modified to phosphoserine: serine 306, serine 368, serine 393, serine 433, and serine 456. Composition is skewed to low complexity over residues 331 to 378 and 386 to 415; these read APGL…SSLA and SLGH…GAPS. Positions 447–468 are enriched in polar residues; it reads SQQQLPKQFSPTMSPTLSSITQ. The residue at position 488 (tyrosine 488) is a Phosphotyrosine. Phosphoserine is present on residues serine 489, serine 490, and serine 492. Over residues 498–507 the composition is skewed to polar residues; sequence QPHTPKSLQQ. The residue at position 501 (threonine 501) is a Phosphothreonine. Positions 509-529 are enriched in low complexity; the sequence is GLPSQSCSVQSSGGQPPGRQS. 3 positions are modified to phosphoserine: serine 613, serine 623, and serine 624.

The protein belongs to the TORC family. Binds, as a tetramer, through its N-terminal region, with the bZIP domain of CREB1. 'Arg-314' in the bZIP domain of CREB1 is essential for this interaction. Interaction, via its C-terminal, with TAF4, enhances recruitment of TAF4 to CREB1. Interacts with SIK2. Interacts with 14-3-3 proteins, YWHAB and YWHAG. Interacts (probably when phosphorylated at Ser-171) with YWHAE. Interacts with calmodulin-dependent catalytic subunit PPP3CA/calcineurin A. Interaction with COP1 mediates nuclear export and degradation of CRTC2. In terms of assembly, (Microbial infection) Interaction with the human T-cell leukemia virus type 1 (HTLV-1) Tax protein is essential for optimal transcription activation by Tax. Phosphorylation/dephosphorylation states of Ser-171 are required for regulating transduction of CREB activity. CRTCs/TORCs are inactive when phosphorylated, and active when dephosphorylated at this site. This primary site of phosphorylation, is regulated by cAMP and calcium levels and is dependent on the phosphorylation of SIKs (SIK1 and SIK2) by LKB1. Following adenylyl cyclase activation, dephosphorylated at Ser-171 by PPP3CA/calcineurin A resulting in CRTC2 dissociation from 14-3-3 proteins and PPP3CA. Both insulin and AMPK increase this phosphorylation of CRTC2 while glucagon suppresses it. Phosphorylation at Ser-274 by MARK2 is induced under low glucose conditions and dephosphorylated in response to glucose influx. Phosphorylation at Ser-274 promotes interaction with 14-3-3 proteins and translocation to the cytoplasm. Post-translationally, asymmetric dimethylation of arginine resisues by PRMT6 enhances the association of CRTC2 with CREB on the promoters of gluconeogenic genes. As to expression, most abundantly expressed in the thymus. Present in both B and T-lymphocytes. Highly expressed in HEK293T cells and in insulinomas. High levels also in spleen, ovary, muscle and lung, with highest levels in muscle. Lower levels found in brain, colon, heart, kidney, prostate, small intestine and stomach. Weak expression in liver and pancreas.

The protein localises to the cytoplasm. It is found in the nucleus. In terms of biological role, transcriptional coactivator for CREB1 which activates transcription through both consensus and variant cAMP response element (CRE) sites. Acts as a coactivator, in the SIK/TORC signaling pathway, being active when dephosphorylated and acts independently of CREB1 'Ser-133' phosphorylation. Enhances the interaction of CREB1 with TAF4. Regulates gluconeogenesis as a component of the LKB1/AMPK/TORC2 signaling pathway. Regulates the expression of specific genes such as the steroidogenic gene, StAR. Potent coactivator of PPARGC1A and inducer of mitochondrial biogenesis in muscle cells. Also coactivator for TAX activation of the human T-cell leukemia virus type 1 (HTLV-1) long terminal repeats (LTR). In Homo sapiens (Human), this protein is CREB-regulated transcription coactivator 2 (CRTC2).